Here is a 200-residue protein sequence, read N- to C-terminus: Small ribosomal subunit protein uS4 (200 aa).

The disordered stretch occupies residues 22-42 (TGKELEKRPYAPGPHGPGQRK). Residues 92 to 155 (TRLDNLVYRL…QNLAVVKESV (64 aa)) enclose the S4 RNA-binding domain.

The protein belongs to the universal ribosomal protein uS4 family. As to quaternary structure, part of the 30S ribosomal subunit. Contacts protein S5. The interaction surface between S4 and S5 is involved in control of translational fidelity.

In terms of biological role, one of the primary rRNA binding proteins, it binds directly to 16S rRNA where it nucleates assembly of the body of the 30S subunit. Functionally, with S5 and S12 plays an important role in translational accuracy. The sequence is that of Small ribosomal subunit protein uS4 from Bacillus pumilus (strain SAFR-032).